A 644-amino-acid chain; its full sequence is Acetyl-coenzyme A synthetase 2 (644 aa).

Residues 189 to 192, threonine 307, and asparagine 331 contribute to the CoA site; that span reads RGGK. ATP is bound by residues 383 to 385, 407 to 412, aspartate 496, and arginine 511; these read GEP and DTWWQT. Position 519 (serine 519) interacts with CoA. Arginine 522 lines the ATP pocket. Positions 533, 535, and 538 each coordinate Mg(2+). Lysine 605 bears the N6-acetyllysine mark.

Belongs to the ATP-dependent AMP-binding enzyme family. Requires Mg(2+) as cofactor. In terms of processing, acetylated. Deacetylation by the SIR2-homolog deacetylase activates the enzyme.

The enzyme catalyses acetate + ATP + CoA = acetyl-CoA + AMP + diphosphate. Catalyzes the conversion of acetate into acetyl-CoA (AcCoA), an essential intermediate at the junction of anabolic and catabolic pathways. AcsA undergoes a two-step reaction. In the first half reaction, AcsA combines acetate with ATP to form acetyl-adenylate (AcAMP) intermediate. In the second half reaction, it can then transfer the acetyl group from AcAMP to the sulfhydryl group of CoA, forming the product AcCoA. This Pseudomonas putida (strain ATCC 47054 / DSM 6125 / CFBP 8728 / NCIMB 11950 / KT2440) protein is Acetyl-coenzyme A synthetase 2.